We begin with the raw amino-acid sequence, 1968 residues long: Signal element on autosome protein 2 (1968 aa).

Residues 72 to 88 (TSSSFSSSLATTTTTSS) are compositionally biased toward low complexity. 2 disordered regions span residues 72-252 (TSSS…TPTQ) and 271-364 (QVQQ…VQEQ). A compositionally biased stretch (basic residues) spans 107–119 (SHHHPSSSHHHHP). Low complexity-rich tracts occupy residues 120-134 (GQQQ…SHLQ), 144-165 (HPYY…YGQA), 219-232 (DQPS…LPPL), and 298-338 (LSSI…SSSS). The span at 346-362 (PNASSSSLIKRQSQDVQ) shows a compositional bias: polar residues. Residues 413 to 440 (YQCPNCNRNLANARNLQRHRQTCGSAQH) form a C2H2-type 1 zinc finger. Disordered regions lie at residues 451–499 (RSPP…LYSP) and 538–601 (WSRD…TLDP). The span at 452 to 467 (SPPPCASAPPVAPPTA) shows a compositional bias: pro residues. Positions 472–482 (FQHHNSTGNLT) are enriched in polar residues. The span at 483–498 (LSYSSSSSRHQSSLYS) shows a compositional bias: low complexity. The span at 570–594 (PLHHLDSFDSADHRKETPRECHEPD) shows a compositional bias: basic and acidic residues. A C2H2-type 2; degenerate zinc finger spans residues 651 to 672 (FTCEACKKSVSSERSLRRHYNT). 2 disordered regions span residues 681 to 712 (AASG…GPEK) and 785 to 854 (VTSA…TGNP). The span at 690–702 (TTKRKPATKRPSK) shows a compositional bias: basic residues. The segment covering 794-804 (HQLPHQQPQQQ) has biased composition (low complexity). Positions 812–824 (LLNEQDESADDDG) are enriched in acidic residues. Residues 827-851 (RSSSGTVSNSTTTTTTATTTSSKST) show a composition bias toward low complexity. The segment at 856–875 (FTCEHCARQLCSMSNLKRHR) adopts a C2H2-type 3; degenerate zinc-finger fold. Disordered stretches follow at residues 882–905 (ASSS…TAPA), 975–1069 (GDAL…EHKN), 1083–1227 (RMDA…SPLD), and 1246–1273 (PGPL…SQQA). Composition is skewed to low complexity over residues 981–1015 (QQHQ…AGRI), 1023–1046 (ILNQ…MLNP), and 1108–1131 (PQRS…YQVQ). Residues 1136–1146 (PLPPMQLPPLQ) show a composition bias toward pro residues. The segment covering 1147–1185 (NPHNQQQQHQMLHQSQMNYQQVQQVQQVQHVQQQQNLQN) has biased composition (low complexity). 2 stretches are compositionally biased toward polar residues: residues 1201 to 1211 (APGNRSRSHSN) and 1251 to 1273 (QGQS…SQQA). A C2H2-type 4 zinc finger spans residues 1274 to 1297 (YICPECKKTYASRKNVKRHRMAVH). 4 disordered regions span residues 1333-1478 (TPDS…ADEE), 1569-1608 (SVGL…QQQQ), 1624-1671 (HPPM…LTCS), and 1769-1822 (ADRQ…PSTN). Residues 1388-1403 (ERQEPPKKPVADDHKS) are compositionally biased toward basic and acidic residues. Composition is skewed to pro residues over residues 1407–1421 (PLPP…PPPY) and 1429–1445 (LNPP…PPLQ). Positions 1589 to 1608 (QHPQQHPQQHPQQHPQQQQQ) are enriched in low complexity. Positions 1624–1633 (HPPMPVSQQF) are enriched in polar residues. The segment at 1668-1694 (LTCSGCKKILGSDYSLRRHRAGCADVQ) adopts a C2H2-type 5; degenerate zinc-finger fold. Positions 1800–1811 (SSSSSSSTSSAS) are enriched in low complexity. The C2H2-type 6 zinc-finger motif lies at 1826-1858 (HYCQFPECGKNFSSEWNLARHTRESCKMTTRAH).

As to expression, expressed in seam cells, intestine cells, pharyngeal muscles and nerve ring neurons.

The protein resides in the nucleus. Its subcellular location is the cytoplasm. Its function is as follows. RNA-binding protein, which regulates the expression of proteins required to control developmental timing of events during the L2 to L3 larval stage switch. Binds to the 3'UTR of the transcript of the heterochronic protein lin-28 to post-transcriptionally negatively regulate its expression in certain tissue types in the later larval stages. During larval development, controls the timing of seam cell division and terminal differentiation into adult alae. In vitro, it can also bind to DNA through its first zinc finger. May bind directly or indirectly to the promoter of the sex-determining factor xol-1 to activate its transcription. Its activation of xol-1 transcription controls sex determination and X chromosome dosage compensation to promote male development. Through the negative regulation of lin-28 transcript, it also has a role in the fox-1-sex-1-mediated determination of sexual fate. Acts in the intestine to play a role in regulating adult lifespan. The chain is Signal element on autosome protein 2 from Caenorhabditis elegans.